Here is a 707-residue protein sequence, read N- to C-terminus: Caprin-1 (707 aa).

Composition is skewed to low complexity over residues 1 to 15 (MPSA…SKSS) and 22 to 43 (GSSG…PATG). Residues 1-48 (MPSATSHSGSGSKSSGPPPPSGSSGSEAAAGAAAPASQHPATGTGAVQ) form a disordered region. Pro-2 carries the post-translational modification N-acetylproline. Residue Ser-10 is modified to Phosphoserine. Positions 58 to 92 (VIDKKLRNLEKKKGKLDDYQERMNKGERLNQDQLD) form a coiled coil. Residue Ser-113 is modified to Phosphoserine. A coiled-coil region spans residues 123–151 (KTIKKTARREQLMREEAEQKRLKTVLELQ). Arg-163 is modified (omega-N-methylarginine). Residues 325–347 (LQQQPQAASPSVPEPHSLTPVAQ) are disordered. The segment covering 326–335 (QQQPQAASPS) has biased composition (low complexity). A phosphoserine mark is found at Ser-333 and Ser-341. The G3BP1-binding stretch occupies residues 358 to 379 (QDLMAQMQGPYNFIQDSMLDFE). 3 disordered regions span residues 412 to 443 (ESRL…YTAS), 523 to 558 (PVPP…EQTE), and 570 to 620 (TYHG…RGLM). The segment covering 431 to 443 (PLVSSTSEGYTAS) has biased composition (polar residues). A compositionally biased stretch (low complexity) spans 535 to 558 (QQSQYQASYNQSFSSQPHQVEQTE). Residues 572-603 (HGSQDQPHQVPGNHQQPPQQSTGFPRSSQPYY) are compositionally biased toward polar residues. A Phosphotyrosine modification is found at Tyr-623. Residues Arg-624 and Arg-631 each carry the omega-N-methylarginine modification. Residues Tyr-634 and Tyr-637 each carry the phosphotyrosine modification. Arg-638 is subject to Omega-N-methylarginine. The segment covering 641 to 655 (FSNTPNSGYTQSQFN) has biased composition (polar residues). Residues 641 to 707 (FSNTPNSGYT…MPQMNTQQVN (67 aa)) form a disordered region. 2 O-linked (GlcNAc) serine glycosylation sites follow: Ser-642 and Ser-647. 4 positions are modified to phosphotyrosine: Tyr-649, Tyr-660, Tyr-663, and Tyr-668. Low complexity-rich tracts occupy residues 674-684 (RGSGQSGPRGA) and 695-707 (NRGM…QQVN). Arg-696 carries the asymmetric dimethylarginine; alternate modification. Residue Arg-696 is modified to Omega-N-methylarginine; alternate.

It belongs to the caprin family. May form homomultimers. Interacts with G3BP1; interaction is direct and promotes stress granule formation. Interacts with G3BP2; interaction is direct and promotes stress granule formation. Interacts with PQBP1. Interacts with DDX3X. Interacts (when phosphorylated by EPHA4) with FMR1; interaction with FMR1 promotes formation of a membraneless compartment. Post-translationally, tyrosine phosphorylation by EPHA4 promotes interaction with FMR1 and liquid-liquid phase separation (LLPS) for the formation of a membraneless compartment that concentrates mRNAs with associated regulatory factors. O-glycosylated (O-GlcNAcylated), in a cell cycle-dependent manner. O-glycosylation by OGT inhibit ability to undergo liquid-liquid phase separation (LLPS). In terms of tissue distribution, expressed in hippocampal and neocortical pyramidal neurons, but not in Purkinje cells.

The protein localises to the cytoplasm. Its subcellular location is the cytoplasmic ribonucleoprotein granule. It localises to the cytosol. The protein resides in the cell projection. It is found in the dendrite. The protein localises to the lamellipodium. With respect to regulation, ability to mediate liquid-liquid phase separation is regulated by ATP: moderate concentrations of ATP enhance phase separation, whereas high concentrations of ATP lead to inhibition of phase separation. Its function is as follows. mRNA-binding protein that acts as a regulator of mRNAs transport, translation and/or stability, and which is involved in neurogenesis, synaptic plasticity in neurons and cell proliferation and migration in multiple cell types. Plays an essential role in cytoplasmic stress granule formation. Acts as an mRNA regulator by mediating formation of some phase-separated membraneless compartment: undergoes liquid-liquid phase separation upon binding to target mRNAs, leading to assemble mRNAs into cytoplasmic ribonucleoprotein granules that concentrate mRNAs with associated regulatory factors. Undergoes liquid-liquid phase separation following phosphorylation and interaction with FMR1, promoting formation of cytoplasmic ribonucleoprotein granules that concentrate mRNAs with factors that inhibit translation and mediate deadenylation of target mRNAs. In these cytoplasmic ribonucleoprotein granules, CAPRIN1 mediates recruitment of CNOT7 deadenylase, leading to mRNA deadenylation and degradation. Binds directly and selectively to MYC and CCND2 mRNAs. In neuronal cells, directly binds to several mRNAs associated with RNA granules, including BDNF, CAMK2A, CREB1, MAP2, NTRK2 mRNAs, as well as to GRIN1 and KPNB1 mRNAs, but not to rRNAs. This chain is Caprin-1 (Caprin1), found in Rattus norvegicus (Rat).